The primary structure comprises 150 residues: UPF0178 protein Daro_2879 (150 aa).

It belongs to the UPF0178 family.

The polypeptide is UPF0178 protein Daro_2879 (Dechloromonas aromatica (strain RCB)).